The chain runs to 469 residues: Glutamate--tRNA ligase (469 aa).

The 'HIGH' region signature appears at 11-21 (PSPTGFIHLGN). Over residues 121 to 131 (PRYDGTWRPEP) the composition is skewed to basic and acidic residues. The tract at residues 121 to 141 (PRYDGTWRPEPGKVLPEPPPG) is disordered. Positions 243-247 (KMSKR) match the 'KMSKS' region motif. Lys246 contacts ATP.

The protein belongs to the class-I aminoacyl-tRNA synthetase family. Glutamate--tRNA ligase type 1 subfamily. Monomer.

It is found in the cytoplasm. The enzyme catalyses tRNA(Glu) + L-glutamate + ATP = L-glutamyl-tRNA(Glu) + AMP + diphosphate. Catalyzes the attachment of glutamate to tRNA(Glu) in a two-step reaction: glutamate is first activated by ATP to form Glu-AMP and then transferred to the acceptor end of tRNA(Glu). In Burkholderia multivorans (strain ATCC 17616 / 249), this protein is Glutamate--tRNA ligase.